The sequence spans 233 residues: Superoxide dismutase [Mn] 3.3, mitochondrial (233 aa).

A mitochondrion-targeting transit peptide spans 1–29 (MALRTLASKNALSFALGGAARPSAESARG). The Mn(2+) site is built by His-57, His-105, Asp-194, and His-198.

This sequence belongs to the iron/manganese superoxide dismutase family. As to quaternary structure, homotetramer. It depends on Mn(2+) as a cofactor. In terms of tissue distribution, predominantly expressed in the embryo late in embryogenesis.

The protein localises to the mitochondrion matrix. The catalysed reaction is 2 superoxide + 2 H(+) = H2O2 + O2. Functionally, destroys superoxide anion radicals which are normally produced within the cells and which are toxic to biological systems. The sequence is that of Superoxide dismutase [Mn] 3.3, mitochondrial (SODA.2) from Zea mays (Maize).